The chain runs to 310 residues: Porphobilinogen deaminase (310 aa).

S-(dipyrrolylmethanemethyl)cysteine is present on cysteine 242.

It belongs to the HMBS family. Monomer. Dipyrromethane serves as cofactor.

The enzyme catalyses 4 porphobilinogen + H2O = hydroxymethylbilane + 4 NH4(+). The protein operates within porphyrin-containing compound metabolism; protoporphyrin-IX biosynthesis; coproporphyrinogen-III from 5-aminolevulinate: step 2/4. Functionally, tetrapolymerization of the monopyrrole PBG into the hydroxymethylbilane pre-uroporphyrinogen in several discrete steps. The polypeptide is Porphobilinogen deaminase (Shewanella pealeana (strain ATCC 700345 / ANG-SQ1)).